Consider the following 331-residue polypeptide: Ornithine carbamoyltransferase (331 aa).

Residues 55–58 (STRT), Q82, R106, and 133–136 (HPTQ) contribute to the carbamoyl phosphate site. Residues N166, D230, and 234–235 (SM) contribute to the L-ornithine site. Carbamoyl phosphate contacts are provided by residues 272–273 (CL) and R317.

Belongs to the aspartate/ornithine carbamoyltransferase superfamily. OTCase family.

It is found in the cytoplasm. It catalyses the reaction carbamoyl phosphate + L-ornithine = L-citrulline + phosphate + H(+). Its pathway is amino-acid biosynthesis; L-arginine biosynthesis; L-arginine from L-ornithine and carbamoyl phosphate: step 1/3. In terms of biological role, reversibly catalyzes the transfer of the carbamoyl group from carbamoyl phosphate (CP) to the N(epsilon) atom of ornithine (ORN) to produce L-citrulline. The protein is Ornithine carbamoyltransferase of Neisseria meningitidis serogroup C / serotype 2a (strain ATCC 700532 / DSM 15464 / FAM18).